Here is a 307-residue protein sequence, read N- to C-terminus: MADEKTFRIGFIVLGLFLLSLGTFLMSHDRPQVYGTFYAMGSVMVIGGVIWSMCQCYPKITFVPADSDFQGILSPKALSLLETGLSEVKSPQPPYVRLWEEAAYDQSLPDFTHIQMKVMGYSEDPRPLLAPELKTGASSVREGEPRTAQAWMEAPVVVHRGSDENEGEKSHSQSSPSVGPQGSAPLASFHDDLDVGSSEGSSLQPSPNRDEPHRQVPWASRGPLDRFSDFALIDDTPTSEDTVLDGQAREAALPRKQQWSLRMKGETVQARAEEPEQEEEDLYYGLPDSPGNPLPDKELGFEPDIQG.

Over Met-1–Lys-5 the chain is Cytoplasmic. Residues Met-1 to Ile-72 form a regulates channel membrane trafficking and anion conductance region. A helical membrane pass occupies residues Thr-6–Met-26. The Extracellular segment spans residues Ser-27–Gln-32. A helical transmembrane segment spans residues Val-33 to Met-53. S-palmitoyl cysteine attachment occurs at residues Cys-54 and Cys-56. At Cys-54–Gly-307 the chain is on the cytoplasmic side. 2 positions are modified to phosphoserine: Ser-79 and Ser-107. 2 disordered regions span residues Thr-135–Ala-154 and Gly-161–Leu-224. Basic and acidic residues predominate over residues Gly-161 to His-171. Position 162 is a phosphoserine (Ser-162). Over residues Ser-172–Ser-183 the composition is skewed to low complexity. The span at Ser-198–Pro-207 shows a compositional bias: polar residues. Residues Ser-228 and Ser-289 each carry the phosphoserine modification. The tract at residues Arg-255–Gly-307 is disordered.

As to quaternary structure, interacts with CLCNK channels. Forms probably heteromers with CLCNKA in the thin ascending limb of Henle and with CLCNKB in the thick ascending limb and more distal segments. Palmitoylation is necessary for activation of plasma membrane-inserted CLC-K/barttin channels. As to expression, expression is evident in inner and outer stripes of the outer medulla of the kidney, most probably representing thin limbs of Henle's loop together with some collecting duct coursing through the outer stripe. In situ hybridization in fetal kidney at 18.5 dpc revealed a clear continuity between hybridization signals from the thin limb of Henle's loop and the distal convoluted tubule, suggesting that part of the expression pattern may result from expression in the thick ascending limb of Henle's loop. In addition, strong signals are present in a subset of cortical tubules, representing distal convoluted tubules or cortical collecting duct. Strong expression is also observed in the inner medulla of the kidney. This expression does not extend all the way to the tip of the papilla. Thus this signal most probably represents cells of the thin ascending limbs. In the inner ear, strong and exclusive expression is detected in marginal cells of the stria vascularis. In addition to cochlear signal, expression is observed in dark cells localized at the base of the crista ampullaris of the vestibular organ.

The protein localises to the basolateral cell membrane. Functionally, regulatory subunit of anion-selective CLCNKA:BSND and CLCNKB:BSND heteromeric channels involved in basolateral chloride conductance along the nephron to achieve urine concentration and maintain systemic acid-base homeostasis, and in the stria vascularis of the inner ear to establish the endocochlear potential necessary for normal hearing. Most likely acts as a chaperone that allosterically regulates proper sorting of CLCNKA:BSND and CLCNKB:BSND channels at the basolateral plasma membrane domain and functional switch to ion conducting state. Mediates constitutive opening of channel common gates. In Mus musculus (Mouse), this protein is Barttin.